Consider the following 521-residue polypeptide: Matrix metalloproteinase-A (521 aa).

The first 21 residues, 1–21 (MFTGLHDILIILFLLVTLKIA), serve as a signal peptide directing secretion. Residues 22–95 (QNVDHTKFLQ…EDHQKSRGKR (74 aa)) constitute a propeptide, activation peptide. Positions 78–85 (PRCGHPDV) match the Cysteine switch motif. C80 contributes to the Zn(2+) binding site. The Extracellular portion of the chain corresponds to 96 to 500 (YAPPQFKWKE…FCPRNEKLVL (405 aa)). N199 carries an N-linked (GlcNAc...) asparagine glycan. Position 215 (H215) interacts with Zn(2+). E216 is a catalytic residue. Zn(2+)-binding residues include H219 and H225. Positions 259–298 (KASKKENEEEERKTENEDKRRKTEKDRGRTREHESDDIRP) are disordered. Residues 261–298 (SKKENEEEERKTENEDKRRKTEKDRGRTREHESDDIRP) are compositionally biased toward basic and acidic residues. 3 Hemopexin repeats span residues 300–347 (ECRV…FPGL), 391–443 (EKYV…WARV), and 444–492 (PKGV…FGFC). Residue N469 is glycosylated (N-linked (GlcNAc...) asparagine). A helical transmembrane segment spans residues 501–521 (NSSSSHFSLIYATITILILIF).

This sequence belongs to the peptidase M10A family. Requires Zn(2+) as cofactor. Expressed in the anchor cell. Expressed in the anchor cell throughout the L3 and the early L4 stage, but not in vulva precursor cells P6.p, P6.px, or P6.pxx. Expression in P6.pxxx cells begins in late-L4 stage. During L4 lethargus, expressed in all four vulE cells, but not in vulF cells. The expression in vulE cells persists in adulthood. In males, expressed in the linker cell (LC) from the early L4 stage until LC death during the L4-to-adult molt.

The protein localises to the cell membrane. It is found in the basolateral cell membrane. Its function is as follows. Metalloprotease which, together with cadherin cdh-3 and hemicentin him-4, plays a role in anchor cell (AC) invasion during postembryonic vulval development probably by promoting the degradation of the basement membrane separating the gonad from the vulva epithelium. The polypeptide is Matrix metalloproteinase-A (Caenorhabditis elegans).